The sequence spans 147 residues: UPF0306 protein YhbP (147 aa).

This sequence belongs to the UPF0306 family.

In Salmonella paratyphi A (strain AKU_12601), this protein is UPF0306 protein YhbP.